A 387-amino-acid polypeptide reads, in one-letter code: ATP phosphoribosyltransferase regulatory subunit (387 aa).

It belongs to the class-II aminoacyl-tRNA synthetase family. HisZ subfamily. As to quaternary structure, heteromultimer composed of HisG and HisZ subunits.

The protein localises to the cytoplasm. It functions in the pathway amino-acid biosynthesis; L-histidine biosynthesis; L-histidine from 5-phospho-alpha-D-ribose 1-diphosphate: step 1/9. Its function is as follows. Required for the first step of histidine biosynthesis. May allow the feedback regulation of ATP phosphoribosyltransferase activity by histidine. This Psychrobacter arcticus (strain DSM 17307 / VKM B-2377 / 273-4) protein is ATP phosphoribosyltransferase regulatory subunit.